A 515-amino-acid polypeptide reads, in one-letter code: Ribose import ATP-binding protein RbsA 1 (515 aa).

2 ABC transporter domains span residues 8–244 (FQME…IGRE) and 256–503 (VPAT…LNIH). 40–47 (GENGAGKS) is an ATP binding site.

This sequence belongs to the ABC transporter superfamily. Ribose importer (TC 3.A.1.2.1) family. In terms of assembly, the complex is composed of an ATP-binding protein (RbsA), two transmembrane proteins (RbsC) and a solute-binding protein (RbsB).

It is found in the cell inner membrane. The catalysed reaction is D-ribose(out) + ATP + H2O = D-ribose(in) + ADP + phosphate + H(+). In terms of biological role, part of the ABC transporter complex RbsABC involved in ribose import. Responsible for energy coupling to the transport system. This chain is Ribose import ATP-binding protein RbsA 1, found in Mesorhizobium japonicum (strain LMG 29417 / CECT 9101 / MAFF 303099) (Mesorhizobium loti (strain MAFF 303099)).